The following is a 300-amino-acid chain: 17-beta-hydroxysteroid dehydrogenase 13 (300 aa).

The first 19 residues, 1 to 19 (MNIILEILLLLITIIYSYL), serve as a signal peptide directing secretion. Position 33 is a phosphoserine (S33). 40–67 (LITGAGHGIGRQTTYEFAKRQSILVLWD) is a binding site for NAD(+). S172 serves as a coordination point for substrate. Residue Y185 is the Proton acceptor of the active site. K189 provides a ligand contact to NAD(+).

This sequence belongs to the short-chain dehydrogenases/reductases (SDR) family. In terms of tissue distribution, highly expressed in the liver. Also detected in ovary, bone marrow, kidney, brain, lung, skeletal muscle, bladder and testis.

It localises to the lipid droplet. It is found in the endoplasmic reticulum. The protein localises to the cytoplasm. The catalysed reaction is 17beta-estradiol + NAD(+) = estrone + NADH + H(+). It carries out the reaction all-trans-retinol + NAD(+) = all-trans-retinal + NADH + H(+). It catalyses the reaction all-trans-retinal + NAD(+) + H2O = all-trans-retinoate + NADH + 2 H(+). Functionally, plays a pivotal role in hepatic lipid metabolism. In vitro, it catalyzes the oxidation of a variety of lipid substrates, including 17beta-estradiol, retinol, retinal, and leukotriene B4. In terms of biological role, has retinol/retinal dehydrogenase activity in vitro. Does not have retinol/retinal dehydrogenase activity in vitro. The chain is 17-beta-hydroxysteroid dehydrogenase 13 from Homo sapiens (Human).